The sequence spans 150 residues: D-galactose-binding lectin (150 aa).

D-galactose-binding residues include H16 and G19. The N-linked (GlcNAc...) asparagine glycan is linked to N26. D-galactose-binding positions include 35 to 37, H64, and G67; that span reads DIH. N74 carries N-linked (GlcNAc...) asparagine glycosylation. Residues 83–85, H108, and G111 contribute to the D-galactose site; that span reads DRH. N-linked (GlcNAc...) asparagine glycosylation is present at N118. 127-129 contributes to the D-galactose binding site; it reads DEH.

In terms of assembly, oligomerizes in solution. The N-terminus is blocked. As to expression, expressed in mantle. Expressed 51 and 1.6 fold in mantle and gonads, respectively, relative to that in hemocytes. Expressed at a much lower level in other tissues tested including gill, muscle and hepatopancreas.

Its activity is regulated as follows. Hemagglutinating activity does not require Ca(2+) ions. Hemagglutinating activity is inhibited by porcine stomach mucin (PSM), bovine submaxillary mucin (BSM) and fetuin. Agglutination of V.proteolyticus bacteria is inhibited by D-galactose, but not by D-glucose. Fungal binding is inhibited by D-galactose, but not by pathogen-associated molecular patterns (PAMPs) including lipopolysaccharide (LPS), peptidoglycan and beta-glucan. D-galactose-binding lectin. Binds both alpha and beta anomer of galactose (Gal). Binds strongly to branched beta-Gal-terminated glycans and weakly to unbranched glycans with alpha-Gal on the end of chains. Has strong affinity for both Gal and GalNAc. Binds glycoproteins containing mucin-type chains. Has hemagglutinating activity towards human group A erythrocytes. Has hemagglutinating activity towards rabbit erythrocytes. Agglutinates V.proteolyticus bacteria. Binds strongly to fungi including species from genera Aspergillus, Alternaria, Fusarium and Haematonectria, and to a lesser extent to fungi from genera Trichoderma. Decreases conidia germination and hyphal growth of fungi. At high concentration, stimulates secretion of cytokines TNF-alpha and IFN-gamma from human peripheral blood cells, and at low concentration reduces hyperexpression of cytokine IL-10 in these cells, indicative of immunomodulatory capability. However, has no effect on IL-4 production. Recognizes pathogen-associated molecular patterns (PAMPs) and binds to peptidoglycan from S.aureus, but has only little binding to beta-1,3-glucan from E.gracilis and lipopolysaccharide (LPS) from E.coli. May be involved in innate immunity acting as an antibacterial or antifungal agent recognizing carbohydrate ligands on the surface of pathogens. The protein is D-galactose-binding lectin of Mytilus trossulus (Blue mussel).